Here is a 600-residue protein sequence, read N- to C-terminus: Chaperone protein DnaK (600 aa).

Threonine 175 carries the phosphothreonine; by autocatalysis modification. A compositionally biased stretch (low complexity) spans 569–578 (SFAQATAQQA). Positions 569-600 (SFAQATAQQANTSESDPKADDSNTIDAEIKQD) are disordered. The span at 583-600 (SDPKADDSNTIDAEIKQD) shows a compositional bias: basic and acidic residues.

This sequence belongs to the heat shock protein 70 family.

Acts as a chaperone. In Mesomycoplasma hyopneumoniae (strain J / ATCC 25934 / NCTC 10110) (Mycoplasma hyopneumoniae), this protein is Chaperone protein DnaK.